We begin with the raw amino-acid sequence, 206 residues long: MSANELTSGDFTESGEPFKLFAEWLKEAEASEPNDPNAVALATVDEHGLPNVRMVLLKGFDDDGFVFYTNFESQKGREILGQKKAAMCFHWKSLRRQVRLRGPVEIVSDAEADAYFKTRARGSRIGAWASKQSRPLESRFALEKAVAEYTARYAIGEIPRPPHWSGFRIRPTSIEFWKDQQFRLHDRIEFRRPSPVGAWEKVRMYP.

Residues 53 to 58, 68 to 69, lysine 75, and glutamine 97 each bind FMN; these read RMVLLK and YT. Lysine 58 is a substrate binding site. Substrate contacts are provided by tyrosine 115, arginine 119, and serine 123. FMN-binding positions include 132–133 and tryptophan 177; that span reads QS. 183–185 contacts substrate; the sequence is RLH. An FMN-binding site is contributed by arginine 187.

The protein belongs to the pyridoxamine 5'-phosphate oxidase family. As to quaternary structure, homodimer. FMN serves as cofactor.

The catalysed reaction is pyridoxamine 5'-phosphate + O2 + H2O = pyridoxal 5'-phosphate + H2O2 + NH4(+). It carries out the reaction pyridoxine 5'-phosphate + O2 = pyridoxal 5'-phosphate + H2O2. It participates in cofactor metabolism; pyridoxal 5'-phosphate salvage; pyridoxal 5'-phosphate from pyridoxamine 5'-phosphate: step 1/1. Its pathway is cofactor metabolism; pyridoxal 5'-phosphate salvage; pyridoxal 5'-phosphate from pyridoxine 5'-phosphate: step 1/1. Its function is as follows. Catalyzes the oxidation of either pyridoxine 5'-phosphate (PNP) or pyridoxamine 5'-phosphate (PMP) into pyridoxal 5'-phosphate (PLP). The protein is Pyridoxine/pyridoxamine 5'-phosphate oxidase of Rhizobium etli (strain ATCC 51251 / DSM 11541 / JCM 21823 / NBRC 15573 / CFN 42).